The primary structure comprises 547 residues: Carboxypeptidase N subunit 2 (547 aa).

A signal peptide spans 1-21 (MFPGAWLCWVSLLLLARLTQP). The LRRNT domain maps to 22–49 (CPVGCDCFGREVFCSDEQLADIPPDIPP). 3 N-linked (GlcNAc...) asparagine glycosylation sites follow: Asn-74, Asn-111, and Asn-119. LRR repeat units follow at residues 98-119 (RLQD…IFSN), 122-143 (SLEK…LFCH), 146-167 (ILES…LFQS), 170-191 (DLRT…AFQS), 194-215 (GLQM…ALGS), 218-239 (SLQE…LFSQ), 242-263 (SLEM…LFSS), 266-287 (NLTF…LFAH), 290-311 (GLLH…AFTN), 314-335 (RLVS…VFRN), 338-359 (QLVK…LFHN), and 362-383 (RLQL…IFDT). 2 N-linked (GlcNAc...) asparagine glycosylation sites follow: Asn-266 and Asn-311. N-linked (GlcNAc...) asparagine glycans are attached at residues Asn-348, Asn-359, and Asn-367. The 53-residue stretch at 395–447 (NPWQCDCHLSYLTSWLRLYNNQISNTHTFCAGPAYLKGQLVPNLKQEQLICPV) folds into the LRRCT domain. Asn-520 carries N-linked (GlcNAc...) asparagine glycosylation.

In terms of assembly, tetramer of two catalytic chains and two glycosylated inactive chains.

The protein localises to the secreted. In terms of biological role, the 83 kDa subunit binds and stabilizes the catalytic subunit at 37 degrees Celsius and keeps it in circulation. Under some circumstances it may be an allosteric modifier of the catalytic subunit. In Mus musculus (Mouse), this protein is Carboxypeptidase N subunit 2 (Cpn2).